Reading from the N-terminus, the 458-residue chain is Histidine--tRNA ligase (458 aa).

The protein belongs to the class-II aminoacyl-tRNA synthetase family. Homodimer.

Its subcellular location is the cytoplasm. The enzyme catalyses tRNA(His) + L-histidine + ATP = L-histidyl-tRNA(His) + AMP + diphosphate + H(+). This is Histidine--tRNA ligase from Azobacteroides pseudotrichonymphae genomovar. CFP2.